The primary structure comprises 1281 residues: Dynactin subunit 1 (1281 aa).

The segment at 1-25 is disordered; sequence MAQSKRHVYSRTPSGSRMSAEASAR. The CAP-Gly domain maps to 48-90; that stretch reads GATLFATGKWVGVILDEAKGKNDGTVQGRKYFTCDEGHGIFVR. The segment at 99-225 is disordered; it reads DGADTTSPET…EEEGLRAQVR (127 aa). The segment covering 102–114 has biased composition (polar residues); sequence DTTSPETPDSSAS. Thr-108, Thr-145, Thr-146, and Thr-147 each carry phosphothreonine. Residues 129 to 152 are compositionally biased toward basic residues; it reads SKLRGPKPKKAPTARKTTTRRPKP. Residues 161–205 are compositionally biased toward low complexity; it reads AGASSSLGPSGSASAGELSSSEPSTPAQTPLAAPIIPTPALTSPG. Phosphoserine occurs at positions 179 and 212. Residues 214-225 are compositionally biased toward basic and acidic residues; sequence SKEEEGLRAQVR. 2 coiled-coil regions span residues 217 to 540 and 952 to 1043; these read EEGL…QQEA and IKEL…QSKR. The interaction with HPS6 stretch occupies residues 911 to 1281; the sequence is EYDAERPPSK…LHQLHDRLIS (371 aa). A disordered region spans residues 1065 to 1084; it reads GEEQQRGGAPGQAPGIVPGP.

It belongs to the dynactin 150 kDa subunit family. In terms of assembly, monomer and homodimer. Subunit of dynactin, a multiprotein complex part of a tripartite complex with dynein and a adapter, such as BICDL1, BICD2 or HOOK3. The dynactin complex is built around ACTR1A/ACTB filament and consists of an actin-related filament composed of a shoulder domain, a pointed end and a barbed end. Its length is defined by its flexible shoulder domain. The soulder is composed of 2 DCTN1 subunits, 4 DCTN2 and 2 DCTN3. DCTN1/p150(glued) binds directly to microtubules and to cytoplasmic dynein. The 4 DCNT2 (via N-terminus) bind the ACTR1A filament and act as molecular rulers to determine the length. The pointed end is important for binding dynein-dynactin cargo adapters. Consists of 4 subunits: ACTR10, DCNT4, DCTN5 and DCTN6. The barbed end is composed of a CAPZA1:CAPZB heterodimers, which binds ACTR1A/ACTB filament and dynactin and stabilizes dynactin. Interacts with the C-terminus of MAPRE1, MAPRE2 and MAPRE3. Interacts (via C-terminus) with SNX6. Interacts with CLN3, DYNAP, ECPAS and FBXL5. Interacts with MISP; this interaction regulates its distribution at the cell cortex. Interacts with CEP131. Interacts with CEP126. Interacts with CLIP1. Interacts with dynein intermediate chain and dynein heavy chain. Interacts with PLK1 (via POLO-box domain). Interacts with TBCB. Binds preferentially to tyrosinated microtubules than to detyrosinated microtubules. Interacts with PARD6A. Interacts with HPS6. Interacts with KIF3A. Interacts with BICD2. Interacts with DST (isoform 9). Interacts with DST (isoform 1). Identified in a complex with MREG and RILP. Interacts with BCCIP (isoform 2/alpha). Interacts with DCDC1. Interacts with AKNA. Interacts with DYNC1I2. Interacts with RUFY3 and RUFY4. Ubiquitinated by a SCF complex containing FBXL5, leading to its degradation by the proteasome. Post-translationally, phosphorylation by SLK at Thr-145, Thr-146 and Thr-147 targets DCTN1 to the centrosome. It is uncertain if SLK phosphorylates all three threonines or one or two of them. PLK1-mediated phosphorylation at Ser-179 is essential for its localization in the nuclear envelope, promotes its dissociation from microtubules during early mitosis and positively regulates nuclear envelope breakdown during prophase.

Its subcellular location is the cytoplasm. The protein resides in the cytoskeleton. It is found in the microtubule organizing center. It localises to the centrosome. The protein localises to the centriole. Its subcellular location is the spindle. The protein resides in the nucleus envelope. It is found in the cell cortex. In terms of biological role, part of the dynactin complex that activates the molecular motor dynein for ultra-processive transport along microtubules. Plays a key role in dynein-mediated retrograde transport of vesicles and organelles along microtubules by recruiting and tethering dynein to microtubules. Binds to both dynein and microtubules providing a link between specific cargos, microtubules and dynein. Essential for targeting dynein to microtubule plus ends, recruiting dynein to membranous cargos and enhancing dynein processivity (the ability to move along a microtubule for a long distance without falling off the track). Can also act as a brake to slow the dynein motor during motility along the microtubule. Can regulate microtubule stability by promoting microtubule formation, nucleation and polymerization and by inhibiting microtubule catastrophe in neurons. Inhibits microtubule catastrophe by binding both to microtubules and to tubulin, leading to enhanced microtubule stability along the axon. Plays a role in metaphase spindle orientation. Plays a role in centriole cohesion and subdistal appendage organization and function. Its recruitment to the centriole in a KIF3A-dependent manner is essential for the maintenance of centriole cohesion and the formation of subdistal appendage. Also required for microtubule anchoring at the mother centriole. Plays a role in primary cilia formation. The protein is Dynactin subunit 1 (DCTN1) of Sus scrofa (Pig).